The sequence spans 446 residues: Tubulin alpha chain-like 3 (446 aa).

The MREC motif signature appears at 1–4 (MREC). GTP-binding residues include glutamine 11, glutamate 78, serine 147, glycine 151, threonine 152, threonine 186, asparagine 213, and asparagine 235. Glutamate 78 provides a ligand contact to Mg(2+). The active site involves glutamate 261.

It belongs to the tubulin family. In terms of assembly, dimer of alpha and beta chains. A typical microtubule is a hollow water-filled tube with an outer diameter of 25 nm and an inner diameter of 15 nM. Alpha-beta heterodimers associate head-to-tail to form protofilaments running lengthwise along the microtubule wall with the beta-tubulin subunit facing the microtubule plus end conferring a structural polarity. Microtubules usually have 13 protofilaments but different protofilament numbers can be found in some organisms and specialized cells. Mg(2+) is required as a cofactor. Some glutamate residues at the C-terminus are polyglutamylated, resulting in polyglutamate chains on the gamma-carboxyl group. Polyglutamylation plays a key role in microtubule severing by spastin (SPAST). SPAST preferentially recognizes and acts on microtubules decorated with short polyglutamate tails: severing activity by SPAST increases as the number of glutamates per tubulin rises from one to eight, but decreases beyond this glutamylation threshold. Glutamylation is also involved in cilia motility. Post-translationally, some glutamate residues at the C-terminus are monoglycylated but not polyglycylated due to the absence of functional TTLL10 in human. Monoglycylation is mainly limited to tubulin incorporated into cilia and flagella axonemes, which is required for their stability and maintenance. Flagella glycylation controls sperm motility. Both polyglutamylation and monoglycylation can coexist on the same protein on adjacent residues, and lowering glycylation levels increases polyglutamylation, and reciprocally.

The protein resides in the cytoplasm. It localises to the cytoskeleton. The catalysed reaction is GTP + H2O = GDP + phosphate + H(+). Its function is as follows. Tubulin is the major constituent of microtubules, a cylinder consisting of laterally associated linear protofilaments composed of alpha- and beta-tubulin heterodimers. Microtubules grow by the addition of GTP-tubulin dimers to the microtubule end, where a stabilizing cap forms. Below the cap, tubulin dimers are in GDP-bound state, owing to GTPase activity of alpha-tubulin. The chain is Tubulin alpha chain-like 3 (TUBAL3) from Homo sapiens (Human).